Here is an 81-residue protein sequence, read N- to C-terminus: D-alanyl carrier protein (81 aa).

In terms of domain architecture, Carrier spans 1-81; sequence MADEAIKNGV…KIIAKVEQAQ (81 aa). An O-(pantetheine 4'-phosphoryl)serine modification is found at serine 39.

It belongs to the DltC family. Post-translationally, 4'-phosphopantetheine is transferred from CoA to a specific serine of apo-DCP.

It localises to the cytoplasm. The protein operates within cell wall biogenesis; lipoteichoic acid biosynthesis. Its function is as follows. Carrier protein involved in the D-alanylation of lipoteichoic acid (LTA). The loading of thioester-linked D-alanine onto DltC is catalyzed by D-alanine--D-alanyl carrier protein ligase DltA. The DltC-carried D-alanyl group is further transferred to cell membrane phosphatidylglycerol (PG) by forming an ester bond, probably catalyzed by DltD. D-alanylation of LTA plays an important role in modulating the properties of the cell wall in Gram-positive bacteria, influencing the net charge of the cell wall. The sequence is that of D-alanyl carrier protein from Lacticaseibacillus rhamnosus (Lactobacillus rhamnosus).